Reading from the N-terminus, the 301-residue chain is NAD kinase (301 aa).

Asp81 acts as the Proton acceptor in catalysis. Residues 81 to 82, 155 to 156, His166, Arg183, Asp185, 196 to 201, and Gln256 contribute to the NAD(+) site; these read DG, NE, and TAYSLS.

It belongs to the NAD kinase family. It depends on a divalent metal cation as a cofactor.

The protein resides in the cytoplasm. The enzyme catalyses NAD(+) + ATP = ADP + NADP(+) + H(+). Its function is as follows. Involved in the regulation of the intracellular balance of NAD and NADP, and is a key enzyme in the biosynthesis of NADP. Catalyzes specifically the phosphorylation on 2'-hydroxyl of the adenosine moiety of NAD to yield NADP. The chain is NAD kinase from Mannheimia succiniciproducens (strain KCTC 0769BP / MBEL55E).